The chain runs to 188 residues: Pyridoxal 5'-phosphate synthase subunit PdxT (188 aa).

Gly-46 to Ser-48 provides a ligand contact to L-glutamine. Cys-78 (nucleophile) is an active-site residue. Residues Arg-105 and Ile-134–Arg-135 each bind L-glutamine. Residues His-170 and Glu-172 each act as charge relay system in the active site.

This sequence belongs to the glutaminase PdxT/SNO family. In terms of assembly, in the presence of PdxS, forms a dodecamer of heterodimers. Only shows activity in the heterodimer.

The enzyme catalyses aldehydo-D-ribose 5-phosphate + D-glyceraldehyde 3-phosphate + L-glutamine = pyridoxal 5'-phosphate + L-glutamate + phosphate + 3 H2O + H(+). It catalyses the reaction L-glutamine + H2O = L-glutamate + NH4(+). It functions in the pathway cofactor biosynthesis; pyridoxal 5'-phosphate biosynthesis. Catalyzes the hydrolysis of glutamine to glutamate and ammonia as part of the biosynthesis of pyridoxal 5'-phosphate. The resulting ammonia molecule is channeled to the active site of PdxS. This is Pyridoxal 5'-phosphate synthase subunit PdxT from Thermotoga maritima (strain ATCC 43589 / DSM 3109 / JCM 10099 / NBRC 100826 / MSB8).